The following is a 210-amino-acid chain: Large ribosomal subunit protein uL4 (210 aa).

Polar residues predominate over residues 41 to 52 (QTNARQGTASTK). A disordered region spans residues 41 to 71 (QTNARQGTASTKTRAEVRGGGRKPWRQKGTG). Over residues 60–71 (GGRKPWRQKGTG) the composition is skewed to basic residues.

It belongs to the universal ribosomal protein uL4 family. Part of the 50S ribosomal subunit.

In terms of biological role, one of the primary rRNA binding proteins, this protein initially binds near the 5'-end of the 23S rRNA. It is important during the early stages of 50S assembly. It makes multiple contacts with different domains of the 23S rRNA in the assembled 50S subunit and ribosome. Its function is as follows. Forms part of the polypeptide exit tunnel. The polypeptide is Large ribosomal subunit protein uL4 (Nostoc sp. (strain PCC 7120 / SAG 25.82 / UTEX 2576)).